A 189-amino-acid polypeptide reads, in one-letter code: MKKIIIGLGNPGKEFQNTYHNIGFLALESFLKNNKHQMIPNSYQGHLYQIQLNNCISFLVKPQMYMNSSGKVVKKILDAYQIKIEDILVILDDIYLPEGKIKLRPQGGHAGHNGLRNIIECCNTNKFKRLKIGVGYDSNIPLNQYLLTPFNLHQKKQILQNIDKIHEIMSKFIQGISFNNLMNQYNVIK.

Phe-15 is a tRNA binding site. His-20 functions as the Proton acceptor in the catalytic mechanism. TRNA is bound by residues Tyr-65, Asn-67, and Asn-113.

The protein belongs to the PTH family. As to quaternary structure, monomer.

The protein resides in the cytoplasm. It catalyses the reaction an N-acyl-L-alpha-aminoacyl-tRNA + H2O = an N-acyl-L-amino acid + a tRNA + H(+). Its function is as follows. Hydrolyzes ribosome-free peptidyl-tRNAs (with 1 or more amino acids incorporated), which drop off the ribosome during protein synthesis, or as a result of ribosome stalling. In terms of biological role, catalyzes the release of premature peptidyl moieties from peptidyl-tRNA molecules trapped in stalled 50S ribosomal subunits, and thus maintains levels of free tRNAs and 50S ribosomes. The polypeptide is Peptidyl-tRNA hydrolase (Phytoplasma australiense).